Reading from the N-terminus, the 98-residue chain is N(2)-fixation sustaining protein CowN (98 aa).

The protein belongs to the CowN family.

In terms of biological role, is required to sustain N(2)-dependent growth in the presence of low levels of carbon monoxide (CO). Probably acts by protecting the N(2) fixation ability of the nitrogenase complex, which is inactivated in the presence of CO. The polypeptide is N(2)-fixation sustaining protein CowN (Azospirillum sp. (strain B510)).